A 226-amino-acid chain; its full sequence is Putative O-methyltransferase Mvan_4497 (226 aa).

S-adenosyl-L-methionine is bound by residues Val-53, Glu-75, 77–78, Ser-83, Asp-101, and Val-102; that span reads GT. Residue Asp-149 coordinates substrate.

Belongs to the class I-like SAM-binding methyltransferase superfamily. Cation-dependent O-methyltransferase family.

This Mycolicibacterium vanbaalenii (strain DSM 7251 / JCM 13017 / BCRC 16820 / KCTC 9966 / NRRL B-24157 / PYR-1) (Mycobacterium vanbaalenii) protein is Putative O-methyltransferase Mvan_4497.